Consider the following 334-residue polypeptide: Ketol-acid reductoisomerase (NADP(+)) (334 aa).

The KARI N-terminal Rossmann domain maps to 1 to 181 (MNRYYDKNAD…GGGRTGILET (181 aa)). Residues 24–27 (YGSQ), R47, S50, S52, and 82–85 (DEFQ) contribute to the NADP(+) site. H107 is a catalytic residue. Residue G133 coordinates NADP(+). A KARI C-terminal knotted domain is found at 182–323 (SFKDETETDL…ESLRSMMPWI (142 aa)). Residues D190, E194, E226, and E230 each coordinate Mg(2+). Substrate is bound at residue S251.

Belongs to the ketol-acid reductoisomerase family. Mg(2+) serves as cofactor.

It catalyses the reaction (2R)-2,3-dihydroxy-3-methylbutanoate + NADP(+) = (2S)-2-acetolactate + NADPH + H(+). The catalysed reaction is (2R,3R)-2,3-dihydroxy-3-methylpentanoate + NADP(+) = (S)-2-ethyl-2-hydroxy-3-oxobutanoate + NADPH + H(+). It functions in the pathway amino-acid biosynthesis; L-isoleucine biosynthesis; L-isoleucine from 2-oxobutanoate: step 2/4. It participates in amino-acid biosynthesis; L-valine biosynthesis; L-valine from pyruvate: step 2/4. Involved in the biosynthesis of branched-chain amino acids (BCAA). Catalyzes an alkyl-migration followed by a ketol-acid reduction of (S)-2-acetolactate (S2AL) to yield (R)-2,3-dihydroxy-isovalerate. In the isomerase reaction, S2AL is rearranged via a Mg-dependent methyl migration to produce 3-hydroxy-3-methyl-2-ketobutyrate (HMKB). In the reductase reaction, this 2-ketoacid undergoes a metal-dependent reduction by NADPH to yield (R)-2,3-dihydroxy-isovalerate. This is Ketol-acid reductoisomerase (NADP(+)) from Ruthia magnifica subsp. Calyptogena magnifica.